Reading from the N-terminus, the 70-residue chain is Small ribosomal subunit protein bS21 (70 aa).

This sequence belongs to the bacterial ribosomal protein bS21 family.

This chain is Small ribosomal subunit protein bS21, found in Sulfurimonas denitrificans (strain ATCC 33889 / DSM 1251) (Thiomicrospira denitrificans (strain ATCC 33889 / DSM 1251)).